The primary structure comprises 220 residues: Glycerol-3-phosphate acyltransferase (220 aa).

A run of 6 helical transmembrane segments spans residues I11–L31, L70–F90, L96–F116, G127–V147, I153–P173, and M193–A213.

Belongs to the PlsY family. Probably interacts with PlsX.

It localises to the cell inner membrane. It catalyses the reaction an acyl phosphate + sn-glycerol 3-phosphate = a 1-acyl-sn-glycero-3-phosphate + phosphate. Its pathway is lipid metabolism; phospholipid metabolism. In terms of biological role, catalyzes the transfer of an acyl group from acyl-phosphate (acyl-PO(4)) to glycerol-3-phosphate (G3P) to form lysophosphatidic acid (LPA). This enzyme utilizes acyl-phosphate as fatty acyl donor, but not acyl-CoA or acyl-ACP. This Helicobacter pylori (strain HPAG1) protein is Glycerol-3-phosphate acyltransferase.